The chain runs to 562 residues: Protein wntless (562 aa).

At 1-13 the chain is on the cytoplasmic side; the sequence is MSGTILENLSGRK. A helical membrane pass occupies residues 14–34; the sequence is LSILVASLLLCQVFCFLLGGL. Over 35-239 the chain is Lumenal; sequence YAPLPAGHVT…AIHQNGGFTQ (205 aa). N-linked (GlcNAc...) asparagine glycosylation occurs at Asn-58. A helical transmembrane segment spans residues 240-260; it reads IWLMLKTVLFPFVVGIMIWFW. The Cytoplasmic segment spans residues 261–270; that stretch reads RRVHLLQRSP. A helical membrane pass occupies residues 271-291; that stretch reads ALLEYMLIYLGGALTFLNLPL. Topologically, residues 292–311 are lumenal; sequence EYLSLVVEMPYMLLLSDIRQ. A helical transmembrane segment spans residues 312–332; sequence GIFYAMLLSFWLVFAGEHMLI. Over 333-344 the chain is Cytoplasmic; it reads QDAPNKSTIRSR. The chain crosses the membrane as a helical span at residues 345–365; that stretch reads YWKHLSAVVVGCISLFVFDIC. Residues 366-390 are Lumenal-facing; it reads ERGVQLRNPFYSIWTTPLGAKVAMT. The helical transmembrane segment at 391-411 threads the bilayer; it reads FIILAGVSAAIYFLFLCYMIW. Topologically, residues 412-441 are cytoplasmic; sequence KVFRNIGDKRTSLPSMSQARRLHYEGLIYR. Residues 442-462 form a helical membrane-spanning segment; that stretch reads FKFLMLATLLCAALTVAGFIM. The Lumenal portion of the chain corresponds to 463–482; the sequence is GQMAEGQWQWNDNVEIQLTS. The helical transmembrane segment at 483-503 threads the bilayer; it reads AFLTGVYGMWNIYIFALLILY. The Cytoplasmic segment spans residues 504 to 562; sequence APSHKQWPTMHHSDETTQSNENIVASAASEEIEFSHLPSDSNPSEISSLTSFTRKVAFD. Residues 539–562 are disordered; sequence HLPSDSNPSEISSLTSFTRKVAFD. The span at 541–556 shows a compositional bias: polar residues; sequence PSDSNPSEISSLTSFT.

It belongs to the wntless family. Interacts with wg; in the Golgi. Interacts with Vps35, a component of the retromer complex; wls stability is regulated by Vps35.

Its subcellular location is the presynaptic cell membrane. The protein localises to the postsynaptic cell membrane. It localises to the cell membrane. The protein resides in the endoplasmic reticulum membrane. It is found in the endosome membrane. Its subcellular location is the golgi apparatus membrane. Functionally, a segment polarity gene required for wingless (wg)-dependent patterning processes, acting in both wg-sending cells and wg-target cells. In non-neuronal cells wls directs wg secretion. The wls traffic loop encompasses the Golgi, the cell surface, an endocytic compartment and a retrograde route leading back to the Golgi, and involves clathrin-mediated endocytosis and the retromer complex (a conserved protein complex consisting of Vps35 and Vps26). In neuronal cells (the larval motorneuron NMJ), the wg signal moves across the synapse via the release of wls-containing exosome-like vesicles. Postsynaptic wls is required for the trafficking of fz2 through the fz2-interacting protein Grip. The polypeptide is Protein wntless (Drosophila ananassae (Fruit fly)).